Here is a 334-residue protein sequence, read N- to C-terminus: WD repeat-containing protein 54 (334 aa).

WD repeat units lie at residues Ser-116–Val-155, Gly-162–Thr-206, and Ala-250–Ser-289.

Homodimer and homotrimer; forms tight forms of dimers and trimers. Interacts with IZUMO1 and IZUMO1R/JUNO. Post-translationally, cross-linked to tightly form both dimers and trimers by TGM2. Cross-linking enhances the activation of EGF receptor-mediated signaling pathway. Cross-linking is inhibited by EGF. Ubiquitinated. EGF increases ubiquitination.

The protein localises to the vesicle. It is found in the cytoplasm. It localises to the cell membrane. Its function is as follows. Plays a role in the adhesion and fusion of the sperm-oocyte membrane through its interactions with IZUMO1 and IZUMO1R/JUNO. When cross-linked to form dimers and trimers, it has a regulatory effect on ERK signaling pathway activity in response to EGF stimulation. Colocalizes with the EGF receptor in WDR54-specific vesicle where it sustains the internalization and controls the degradation of the EGF receptor after EGF stimulation. This is WD repeat-containing protein 54 from Mus musculus (Mouse).